The primary structure comprises 392 residues: UPF0229 protein CPF_1540 (392 aa).

Residues valine 75–lysine 100 form a disordered region. Over residues glycine 80–lysine 94 the composition is skewed to basic and acidic residues.

The protein belongs to the UPF0229 family.

The polypeptide is UPF0229 protein CPF_1540 (Clostridium perfringens (strain ATCC 13124 / DSM 756 / JCM 1290 / NCIMB 6125 / NCTC 8237 / Type A)).